Here is a 119-residue protein sequence, read N- to C-terminus: Large ribosomal subunit protein uL18 (119 aa).

Belongs to the universal ribosomal protein uL18 family. In terms of assembly, part of the 50S ribosomal subunit; part of the 5S rRNA/L5/L18/L25 subcomplex. Contacts the 5S and 23S rRNAs.

In terms of biological role, this is one of the proteins that bind and probably mediate the attachment of the 5S RNA into the large ribosomal subunit, where it forms part of the central protuberance. The sequence is that of Large ribosomal subunit protein uL18 from Dinoroseobacter shibae (strain DSM 16493 / NCIMB 14021 / DFL 12).